The sequence spans 147 residues: Deoxyuridine 5'-triphosphate nucleotidohydrolase (147 aa).

Residues Arg67–Gly69, Asn80, and Thr84–Asp86 each bind substrate.

Belongs to the dUTPase family. Mg(2+) is required as a cofactor.

The enzyme catalyses dUTP + H2O = dUMP + diphosphate + H(+). Its pathway is pyrimidine metabolism; dUMP biosynthesis; dUMP from dCTP (dUTP route): step 2/2. In terms of biological role, this enzyme is involved in nucleotide metabolism: it produces dUMP, the immediate precursor of thymidine nucleotides and it decreases the intracellular concentration of dUTP so that uracil cannot be incorporated into DNA. This is Deoxyuridine 5'-triphosphate nucleotidohydrolase from Anaeromyxobacter sp. (strain Fw109-5).